The chain runs to 804 residues: Leucine--tRNA ligase (804 aa).

The 'HIGH' region motif lies at 40–51 (PYPSGAGLHVGH). Positions 576 to 580 (KMSKS) match the 'KMSKS' region motif. K579 serves as a coordination point for ATP.

Belongs to the class-I aminoacyl-tRNA synthetase family.

It is found in the cytoplasm. It carries out the reaction tRNA(Leu) + L-leucine + ATP = L-leucyl-tRNA(Leu) + AMP + diphosphate. The chain is Leucine--tRNA ligase from Staphylococcus aureus (strain MRSA252).